The sequence spans 495 residues: MQVIETLAEGLKREIKVVISAKDMEGRMNERLAEVKDKVRINGFRPGKVPVSHLKKVYGKSIMADLVNEIVRDQPPAILTERGEKSATQPEVAMTEDKDEAEKILAAEADFEFTLSYEVIPAIELKSVKGVKVTREVAEIGEDEVTEQILKIAESARSYEAKKGKAADGDRVTIDYLGKVDGVAFDGGKDEDSQLVIGSNRFIPGFEEQLVGVKAGDEKTITVTFPAEYPAKNLAGKEATFDITVKEVAAPGEVEINDELASKLGLESADRLKEIVRGQIESQYGSVTRQKVKRQILDQLDEMYQFDTPQKLVDAEFASIWRQIQTDLAESGKTFEDEDTTEEKAREEYRKLAERRVRLGLVLSEIGEKAGVEVSEDELQRALYAQLQQFPGQEKEILDFFRNTPGASANLRAPIFEEKVIDHLLTEVDVTDKTVSKEALLADDESEDKPAAKKAAPKKKAAKAEATEAAAEGEEAAVPKKKAAPKKKAAEDSAE.

Positions 169–254 constitute a PPIase FKBP-type domain; sequence GDRVTIDYLG…VKEVAAPGEV (86 aa). Positions 439 to 495 are disordered; that stretch reads ALLADDESEDKPAAKKAAPKKKAAKAEATEAAAEGEEAAVPKKKAAPKKKAAEDSAE.

Belongs to the FKBP-type PPIase family. Tig subfamily.

The protein localises to the cytoplasm. It carries out the reaction [protein]-peptidylproline (omega=180) = [protein]-peptidylproline (omega=0). Its function is as follows. Involved in protein export. Acts as a chaperone by maintaining the newly synthesized protein in an open conformation. Functions as a peptidyl-prolyl cis-trans isomerase. The sequence is that of Trigger factor from Rhizobium rhizogenes (strain K84 / ATCC BAA-868) (Agrobacterium radiobacter).